The sequence spans 273 residues: Large ribosomal subunit protein uL2 (273 aa).

Residues 228-273 (VDHPHGGGEGKTSGGRHPVTPWGFPTKGKKTRKNKRTSKFIVKKRK) are disordered. Positions 254 to 273 (KGKKTRKNKRTSKFIVKKRK) are enriched in basic residues.

The protein belongs to the universal ribosomal protein uL2 family. As to quaternary structure, part of the 50S ribosomal subunit. Forms a bridge to the 30S subunit in the 70S ribosome.

One of the primary rRNA binding proteins. Required for association of the 30S and 50S subunits to form the 70S ribosome, for tRNA binding and peptide bond formation. It has been suggested to have peptidyltransferase activity; this is somewhat controversial. Makes several contacts with the 16S rRNA in the 70S ribosome. The polypeptide is Large ribosomal subunit protein uL2 (Rickettsia felis (strain ATCC VR-1525 / URRWXCal2) (Rickettsia azadi)).